The following is a 104-amino-acid chain: Large ribosomal subunit protein uL24 (104 aa).

Belongs to the universal ribosomal protein uL24 family. In terms of assembly, part of the 50S ribosomal subunit.

Functionally, one of two assembly initiator proteins, it binds directly to the 5'-end of the 23S rRNA, where it nucleates assembly of the 50S subunit. One of the proteins that surrounds the polypeptide exit tunnel on the outside of the subunit. In Colwellia psychrerythraea (strain 34H / ATCC BAA-681) (Vibrio psychroerythus), this protein is Large ribosomal subunit protein uL24.